Consider the following 280-residue polypeptide: Urease accessory protein UreD (280 aa).

This sequence belongs to the UreD family. UreD, UreF and UreG form a complex that acts as a GTP-hydrolysis-dependent molecular chaperone, activating the urease apoprotein by helping to assemble the nickel containing metallocenter of UreC. The UreE protein probably delivers the nickel.

The protein resides in the cytoplasm. Functionally, required for maturation of urease via the functional incorporation of the urease nickel metallocenter. This is Urease accessory protein UreD from Vibrio parahaemolyticus.